We begin with the raw amino-acid sequence, 241 residues long: 2-C-methyl-D-erythritol 4-phosphate cytidylyltransferase (241 aa).

The protein belongs to the IspD/TarI cytidylyltransferase family. IspD subfamily.

It catalyses the reaction 2-C-methyl-D-erythritol 4-phosphate + CTP + H(+) = 4-CDP-2-C-methyl-D-erythritol + diphosphate. The protein operates within isoprenoid biosynthesis; isopentenyl diphosphate biosynthesis via DXP pathway; isopentenyl diphosphate from 1-deoxy-D-xylulose 5-phosphate: step 2/6. In terms of biological role, catalyzes the formation of 4-diphosphocytidyl-2-C-methyl-D-erythritol from CTP and 2-C-methyl-D-erythritol 4-phosphate (MEP). In Hahella chejuensis (strain KCTC 2396), this protein is 2-C-methyl-D-erythritol 4-phosphate cytidylyltransferase.